The chain runs to 519 residues: uncharacterized protein (519 aa).

The next 13 helical transmembrane spans lie at 19 to 39 (FSSS…AIAT), 42 to 62 (VLVS…DWQI), 87 to 107 (MNIV…TVSG), 128 to 148 (LLAA…SLAV), 179 to 199 (VMMP…GLLA), 220 to 240 (FYAI…FDIA), 270 to 290 (LILP…YTGA), 311 to 331 (VGTS…LLII), 345 to 365 (WIVG…AWTI), 386 to 406 (IPMQ…AFST), 413 to 433 (FGIM…ELLL), 475 to 495 (LPYA…VGFT), and 496 to 516 (YSGL…IFAV).

Its subcellular location is the cell membrane. This is an uncharacterized protein from Haemophilus influenzae (strain ATCC 51907 / DSM 11121 / KW20 / Rd).